We begin with the raw amino-acid sequence, 430 residues long: Enolase (430 aa).

Gln-167 lines the (2R)-2-phosphoglycerate pocket. Glu-209 acts as the Proton donor in catalysis. Positions 245, 286, and 313 each coordinate Mg(2+). (2R)-2-phosphoglycerate is bound by residues Lys-338, Arg-367, Ser-368, and Lys-389. The active-site Proton acceptor is the Lys-338.

It belongs to the enolase family. It depends on Mg(2+) as a cofactor.

It localises to the cytoplasm. It is found in the secreted. Its subcellular location is the cell surface. The enzyme catalyses (2R)-2-phosphoglycerate = phosphoenolpyruvate + H2O. Its pathway is carbohydrate degradation; glycolysis; pyruvate from D-glyceraldehyde 3-phosphate: step 4/5. Its function is as follows. Catalyzes the reversible conversion of 2-phosphoglycerate (2-PG) into phosphoenolpyruvate (PEP). It is essential for the degradation of carbohydrates via glycolysis. In Synechococcus sp. (strain CC9902), this protein is Enolase.